The chain runs to 794 residues: Zinc finger and BTB domain-containing protein 17 (794 aa).

One can recognise a BTB domain in the interval 1–104 (MDFPQHSQRV…VASFLQMQDI (104 aa)). A disordered region spans residues 116–285 (EPSSTTGESA…QNLRSGTYGD (170 aa)). The span at 132–142 (GGDKRAKDEKA) shows a compositional bias: basic and acidic residues. Low complexity predominate over residues 203–216 (SSMAAAEAEALSES). A compositionally biased stretch (basic and acidic residues) spans 243–252 (VKEEGMHLDN). Over residues 254-263 (EPPEENEESA) the composition is skewed to acidic residues. Residues 260 to 299 (EESAGTDSGQELGMEGQNLRSGTYGDRTESKAYGSIIHKC) form an interaction with MYC region. C2H2-type zinc fingers lie at residues 297–319 (HKCE…IRIH), 325–347 (FSCR…EKTH), 353–375 (YGCE…KKRH), 381–403 (YRCG…QLVH), 409–431 (YQCD…LETH), 437–459 (HKCP…LKIH), 465–487 (LKCR…LRIH), 493–515 (YVCT…VRIH), 519–543 (KPCQ…VRQH), 549–571 (YVCE…IRHH), 577–599 (HKCS…IIIH), 605–628 (YLCD…KTVH), and 708–730 (YACD…VRIH). A Glycyl lysine isopeptide (Lys-Gly) (interchain with G-Cter in ubiquitin) cross-link involves residue lysine 388. A Glycyl lysine isopeptide (Lys-Gly) (interchain with G-Cter in ubiquitin) cross-link involves residue lysine 472. The tract at residues 628-709 (HQGKAGIKIL…EDPNTHILYA (82 aa)) is interaction with MYC. Residues 628 to 794 (HQGKAGIKIL…TAPDCLPPAE (167 aa)) are interaction with HCFC1. The tract at residues 769 to 794 (PRDGTEGQPTLAESPPTAPDCLPPAE) is disordered. A compositionally biased stretch (pro residues) spans 784–794 (PTAPDCLPPAE).

Belongs to the krueppel C2H2-type zinc-finger protein family. In terms of assembly, homooligomerizes (via the BTB/POZ domain), multimerization is required for DNA binding. Binds to the C-terminal helix-loop-helix motif of MYC which inhibits ZBTB17 transactivation and growth arrest activities and renders it insoluble in the nucleus. Also interacts with HCFC1, MAGEA4 and TMPRSS11A. Interacts (via the C-terminal zinc fingers) with GFI1; the interaction results in the recruitment of MYC to the CDKN1A/p21 and CDKN1B promoters and repression of transcription. Interacts with TRAF2, interfering with the binding of UBC13 to TRAF2, and inhibiting TRAF2 E3 ligase activity. Interacts with BCL6; the interaction inhibits ZBTB17 transactivation activity on target genes involved in cell cycle arrest. Interacts with ZBTB49; this interaction blocks ZBTB17-mediated repression of RB1. Post-translationally, undergoes 'Lys-48'-linked polyubiquitination at Lys-388 and Lys-472 and subsequent proteasomal degradation in a TRAF2-dependent manner and upon TNFA stimulation. Found in all the embryonic and adult tissues examined.

It is found in the nucleus. Functionally, transcription factor that can function as an activator or repressor depending on its binding partners, and by targeting negative regulators of cell cycle progression. Has been shown to bind to the promoters of adenovirus major late protein and cyclin D1 and activate transcription. Required for early embryonic development during gastrulation. Plays a critical role in early lymphocyte development, where it is essential to prevent apoptosis in lymphoid precursors, allowing them to survive in response to IL7 and undergo proper lineage commitment. Represses RB1 transcription; this repression can be blocked by interaction with ZBTB49. The polypeptide is Zinc finger and BTB domain-containing protein 17 (Zbtb17) (Mus musculus (Mouse)).